The sequence spans 164 residues: Transmembrane protein 234 (164 aa).

3 helical membrane-spanning segments follow: residues Met1–Thr21, Leu82–Leu102, and Val112–Trp132.

It belongs to the TMEM234 family.

Its subcellular location is the membrane. This is Transmembrane protein 234 (TMEM234) from Homo sapiens (Human).